The primary structure comprises 202 residues: Orotate phosphoribosyltransferase (202 aa).

5-phospho-alpha-D-ribose 1-diphosphate-binding positions include Lys-93 and 113 to 121 (EDIITTGGS). Residues Thr-117 and Arg-145 each coordinate orotate.

Belongs to the purine/pyrimidine phosphoribosyltransferase family. PyrE subfamily. As to quaternary structure, homodimer. Requires Mg(2+) as cofactor.

It catalyses the reaction orotidine 5'-phosphate + diphosphate = orotate + 5-phospho-alpha-D-ribose 1-diphosphate. The protein operates within pyrimidine metabolism; UMP biosynthesis via de novo pathway; UMP from orotate: step 1/2. Catalyzes the transfer of a ribosyl phosphate group from 5-phosphoribose 1-diphosphate to orotate, leading to the formation of orotidine monophosphate (OMP). This is Orotate phosphoribosyltransferase from Campylobacter fetus subsp. fetus (strain 82-40).